A 564-amino-acid chain; its full sequence is Dihydroxy-acid dehydratase (564 aa).

Cys-53 serves as a coordination point for [2Fe-2S] cluster. Asp-85 is a binding site for Mg(2+). Cys-126 is a [2Fe-2S] cluster binding site. Asp-127 and Lys-128 together coordinate Mg(2+). Residue Lys-128 is modified to N6-carboxylysine. Cys-203 is a [2Fe-2S] cluster binding site. Mg(2+) is bound at residue Glu-454. Catalysis depends on Ser-480, which acts as the Proton acceptor.

Belongs to the IlvD/Edd family. As to quaternary structure, homodimer. The cofactor is [2Fe-2S] cluster. Requires Mg(2+) as cofactor.

The catalysed reaction is (2R)-2,3-dihydroxy-3-methylbutanoate = 3-methyl-2-oxobutanoate + H2O. It catalyses the reaction (2R,3R)-2,3-dihydroxy-3-methylpentanoate = (S)-3-methyl-2-oxopentanoate + H2O. The protein operates within amino-acid biosynthesis; L-isoleucine biosynthesis; L-isoleucine from 2-oxobutanoate: step 3/4. It participates in amino-acid biosynthesis; L-valine biosynthesis; L-valine from pyruvate: step 3/4. Functions in the biosynthesis of branched-chain amino acids. Catalyzes the dehydration of (2R,3R)-2,3-dihydroxy-3-methylpentanoate (2,3-dihydroxy-3-methylvalerate) into 2-oxo-3-methylpentanoate (2-oxo-3-methylvalerate) and of (2R)-2,3-dihydroxy-3-methylbutanoate (2,3-dihydroxyisovalerate) into 2-oxo-3-methylbutanoate (2-oxoisovalerate), the penultimate precursor to L-isoleucine and L-valine, respectively. This is Dihydroxy-acid dehydratase from Leifsonia xyli subsp. xyli (strain CTCB07).